The primary structure comprises 141 residues: Large ribosomal subunit protein uL11 (141 aa).

Belongs to the universal ribosomal protein uL11 family. Part of the ribosomal stalk of the 50S ribosomal subunit. Interacts with L10 and the large rRNA to form the base of the stalk. L10 forms an elongated spine to which L12 dimers bind in a sequential fashion forming a multimeric L10(L12)X complex. One or more lysine residues are methylated.

Its function is as follows. Forms part of the ribosomal stalk which helps the ribosome interact with GTP-bound translation factors. This Clostridium perfringens (strain ATCC 13124 / DSM 756 / JCM 1290 / NCIMB 6125 / NCTC 8237 / Type A) protein is Large ribosomal subunit protein uL11.